Reading from the N-terminus, the 395-residue chain is NAC domain-containing protein 7 (395 aa).

An NAC domain is found at 7–156 (VPPGFRFHPT…GWVVCRVFKK (150 aa)). Residues 107-162 (IGMRKTLVFYKGRAPNGQKSDWIMHEYRLETDENGTPQEEGWVVCRVFKKRLAAVR) mediate DNA binding. Composition is skewed to polar residues over residues 344–362 (AATA…SNAE) and 382–395 (TAST…DLWK). The tract at residues 344-395 (AATASASIQNNAKDTSNAEYQVDEEKDPKRASDMGEEYTASTSSSCQIDLWK) is disordered.

It belongs to the plant vascular related NAC-domain protein family. In terms of assembly, interacts with NAC083/VNI2. In terms of tissue distribution, expressed in root, shoot and hypocotyl vascular elements, columella root caps, epidermal and cortex root cells and root-hypocotyl junctions. Observed predominantly in root imature xylem vessels. Present in root developing xylems. Specifically expressed in vessels in the secondary xylem of the root-hypocotyl region, and in vessels but not in interfascicular fibers in stems.

It localises to the nucleus. Functionally, transcription activator that binds to the secondary wall NAC binding element (SNBE), 5'-(T/A)NN(C/T)(T/C/G)TNNNNNNNA(A/C)GN(A/C/T)(A/T)-3', in the promoter of target genes. Involved in xylem formation by promoting the expression of secondary wall-associated transcription factors and of genes involved in secondary wall biosynthesis and programmed cell death, genes driven by the secondary wall NAC binding element (SNBE). Triggers thickening of secondary walls. This chain is NAC domain-containing protein 7, found in Arabidopsis thaliana (Mouse-ear cress).